The primary structure comprises 155 residues: Endoribonuclease YbeY (155 aa).

Positions 120, 124, and 130 each coordinate Zn(2+).

This sequence belongs to the endoribonuclease YbeY family. Zn(2+) is required as a cofactor.

It is found in the cytoplasm. In terms of biological role, single strand-specific metallo-endoribonuclease involved in late-stage 70S ribosome quality control and in maturation of the 3' terminus of the 16S rRNA. The polypeptide is Endoribonuclease YbeY (Alkaliphilus metalliredigens (strain QYMF)).